Here is a 271-residue protein sequence, read N- to C-terminus: Putative phosphoenolpyruvate synthase regulatory protein (271 aa).

152–159 (GVSRCGKT) is a binding site for ADP.

It belongs to the pyruvate, phosphate/water dikinase regulatory protein family. PSRP subfamily.

The catalysed reaction is [pyruvate, water dikinase] + ADP = [pyruvate, water dikinase]-phosphate + AMP + H(+). The enzyme catalyses [pyruvate, water dikinase]-phosphate + phosphate + H(+) = [pyruvate, water dikinase] + diphosphate. Its function is as follows. Bifunctional serine/threonine kinase and phosphorylase involved in the regulation of the phosphoenolpyruvate synthase (PEPS) by catalyzing its phosphorylation/dephosphorylation. The polypeptide is Putative phosphoenolpyruvate synthase regulatory protein (Legionella pneumophila (strain Lens)).